Reading from the N-terminus, the 338-residue chain is Lipoate-protein ligase A (338 aa).

Residues 29–216 form the BPL/LPL catalytic domain; it reads SPNQRVLFLW…AFFAYYDEQV (188 aa). ATP contacts are provided by residues R71, 76–79, and K134; that span reads GAVF. K134 is a binding site for (R)-lipoate.

This sequence belongs to the LplA family. As to quaternary structure, monomer.

Its subcellular location is the cytoplasm. The catalysed reaction is L-lysyl-[lipoyl-carrier protein] + (R)-lipoate + ATP = N(6)-[(R)-lipoyl]-L-lysyl-[lipoyl-carrier protein] + AMP + diphosphate + H(+). It participates in protein modification; protein lipoylation via exogenous pathway; protein N(6)-(lipoyl)lysine from lipoate: step 1/2. Its pathway is protein modification; protein lipoylation via exogenous pathway; protein N(6)-(lipoyl)lysine from lipoate: step 2/2. Functionally, catalyzes both the ATP-dependent activation of exogenously supplied lipoate to lipoyl-AMP and the transfer of the activated lipoyl onto the lipoyl domains of lipoate-dependent enzymes. The protein is Lipoate-protein ligase A of Yersinia pseudotuberculosis serotype O:1b (strain IP 31758).